An 893-amino-acid chain; its full sequence is Phosphatidate phosphatase LPIN2 (893 aa).

Residues 1–108 (MNYVGQLAGQ…LPAYLATSPI (108 aa)) form an N-LIP region. A Phosphoserine modification is found at Ser106. The tract at residues 122–216 (LVKSSGNERP…EDYKEPSLFH (95 aa)) is disordered. Residues 123–151 (VKSSGNERPAQSSDVSHTLESEAVFTQSS) are compositionally biased toward polar residues. Residues 152 to 162 (VKKKKRRRKKC) are compositionally biased toward basic residues. A Nuclear localization signal motif is present at residues 153–158 (KKKKRR). Phosphoserine occurs at positions 174, 186, and 187. Basic and acidic residues predominate over residues 204–213 (LKEEDYKEPS). 2 positions are modified to phosphoserine: Ser243 and Ser303. 2 disordered regions span residues 357–400 (LLDA…PDDI) and 417–456 (FPKSDTDPGSRQWPESDTFSGSQSPQSVGSAAADSGTECL). The segment covering 360 to 371 (ADPVPSPSAEAP) has biased composition (low complexity). A compositionally biased stretch (basic residues) spans 384 to 393 (KKKGVHKRSQ). The span at 423–445 (DPGSRQWPESDTFSGSQSPQSVG) shows a compositional bias: polar residues. Ser563 bears the Phosphoserine mark. The segment at 568–611 (LPETKEGKSEVPPANDLPSNAEEPTSARPAENDTSSDEGSQELE) is disordered. The segment covering 601–611 (TSSDEGSQELE) has biased composition (acidic residues). The C-LIP stretch occupies residues 632–834 (YKKSLRLSSD…RIFTVNPKGE (203 aa)). A DXDXT motif motif is present at residues 686-690 (DIDGT). An LXXIL motif motif is present at residues 697–701 (LGQIL).

Belongs to the lipin family. Mg(2+) is required as a cofactor. Expressed at high level in liver and to some extend in lung, kidney, placenta, spleen, thymus, lymph node, prostate, testes, small intestine, and colon. Expressed also in circulating red blood cells and site of lymphopoiesis.

It localises to the nucleus. The protein localises to the cytoplasm. The protein resides in the cytosol. It is found in the endoplasmic reticulum membrane. It catalyses the reaction a 1,2-diacyl-sn-glycero-3-phosphate + H2O = a 1,2-diacyl-sn-glycerol + phosphate. With respect to regulation, inhibited by N-ethylmaleimide. In terms of biological role, acts as a magnesium-dependent phosphatidate phosphatase enzyme which catalyzes the conversion of phosphatidic acid to diacylglycerol during triglyceride, phosphatidylcholine and phosphatidylethanolamine biosynthesis in the endoplasmic reticulum membrane. Plays important roles in controlling the metabolism of fatty acids at different levels. Also acts as a nuclear transcriptional coactivator for PPARGC1A to modulate lipid metabolism. In Mus musculus (Mouse), this protein is Phosphatidate phosphatase LPIN2.